A 145-amino-acid polypeptide reads, in one-letter code: D-aminoacyl-tRNA deacylase (145 aa).

The Gly-cisPro motif, important for rejection of L-amino acids signature appears at 137-138 (GP).

Belongs to the DTD family. In terms of assembly, homodimer.

It is found in the cytoplasm. The catalysed reaction is glycyl-tRNA(Ala) + H2O = tRNA(Ala) + glycine + H(+). It catalyses the reaction a D-aminoacyl-tRNA + H2O = a tRNA + a D-alpha-amino acid + H(+). Functionally, an aminoacyl-tRNA editing enzyme that deacylates mischarged D-aminoacyl-tRNAs. Also deacylates mischarged glycyl-tRNA(Ala), protecting cells against glycine mischarging by AlaRS. Acts via tRNA-based rather than protein-based catalysis; rejects L-amino acids rather than detecting D-amino acids in the active site. By recycling D-aminoacyl-tRNA to D-amino acids and free tRNA molecules, this enzyme counteracts the toxicity associated with the formation of D-aminoacyl-tRNA entities in vivo and helps enforce protein L-homochirality. This Limosilactobacillus reuteri (strain DSM 20016) (Lactobacillus reuteri) protein is D-aminoacyl-tRNA deacylase.